The following is a 90-amino-acid chain: Phosphocarrier protein NPr (90 aa).

Positions 2–90 (TVKQTVEISN…ALFNAGFDED (89 aa)) constitute an HPr domain. Histidine 16 functions as the Pros-phosphohistidine intermediate in the catalytic mechanism.

The protein belongs to the HPr family.

It is found in the cytoplasm. Functionally, component of the phosphoenolpyruvate-dependent nitrogen-metabolic phosphotransferase system (nitrogen-metabolic PTS), that seems to be involved in regulating nitrogen metabolism. The phosphoryl group from phosphoenolpyruvate (PEP) is transferred to the phosphoryl carrier protein NPr by enzyme I-Ntr. Phospho-NPr then transfers it to EIIA-Ntr. Could function in the transcriptional regulation of sigma-54 dependent operons in conjunction with the NPr (PtsO) and EIIA-Ntr (PtsN) proteins. The protein is Phosphocarrier protein NPr (ptsO) of Klebsiella oxytoca.